A 522-amino-acid chain; its full sequence is Glucose-6-phosphate 1-dehydrogenase (522 aa).

NADP(+) is bound by residues 40–47 (GASGDLAK), Arg74, and Lys177. Residues Lys177, 207–211 (HYLGK), Glu245, and Asp264 each bind D-glucose 6-phosphate. The active-site Proton acceptor is His269. Arg364 is an NADP(+) binding site. Lys367 and Lys372 together coordinate D-glucose 6-phosphate. 3 residues coordinate NADP(+): Lys373, Arg377, and Arg401. D-glucose 6-phosphate is bound at residue Gln403. NADP(+)-binding positions include 409–411 (YMK), 429–431 (DLT), Arg495, and Trp517.

This sequence belongs to the glucose-6-phosphate dehydrogenase family.

It localises to the cytoplasm. It is found in the cytosol. The enzyme catalyses D-glucose 6-phosphate + NADP(+) = 6-phospho-D-glucono-1,5-lactone + NADPH + H(+). It functions in the pathway carbohydrate degradation; pentose phosphate pathway; D-ribulose 5-phosphate from D-glucose 6-phosphate (oxidative stage): step 1/3. Functionally, cytosolic glucose-6-phosphate dehydrogenase that catalyzes the first and rate-limiting step of the oxidative branch within the pentose phosphate pathway/shunt, an alternative route to glycolysis for the dissimilation of carbohydrates and a major source of reducing power and metabolic intermediates for fatty acid and nucleic acid biosynthetic processes. This Caenorhabditis elegans protein is Glucose-6-phosphate 1-dehydrogenase (gspd-1).